The primary structure comprises 416 residues: D-amino acid dehydrogenase (416 aa).

3–17 (ITILGSGVIGVTTAY) is a binding site for FAD.

This sequence belongs to the DadA oxidoreductase family. It depends on FAD as a cofactor.

It carries out the reaction a D-alpha-amino acid + A + H2O = a 2-oxocarboxylate + AH2 + NH4(+). The protein operates within amino-acid degradation; D-alanine degradation; NH(3) and pyruvate from D-alanine: step 1/1. Functionally, oxidative deamination of D-amino acids. This chain is D-amino acid dehydrogenase, found in Brucella abortus (strain S19).